Reading from the N-terminus, the 257-residue chain is Major prion protein (257 aa).

Positions 1–24 (MVKSHIGGWILLLFVATWSDVGLC) are cleaved as a signal peptide. The interaction with GRB2, ERI3 and SYN1 stretch occupies residues 25–234 (KKRPKPGGWN…ESEAYYQRGA (210 aa)). Residues 28-110 (PKPGGWNTGG…GQWGKPNKPK (83 aa)) are disordered. Gly residues-rich tracts occupy residues 33–48 (WNTG…GSPG) and 55–101 (QGGG…GSHG). Repeat copies occupy residues 54–62 (PQGGGGWGQ), 63–70 (PHGGGWGQ), 71–78 (PHGGGWGQ), 79–86 (PHGGGWGQ), and 87–95 (PHGGGGWGQ). Residues 54 to 95 (PQGGGGWGQPHGGGWGQPHGGGWGQPHGGGWGQPHGGGGWGQ) are 5 X 8 AA tandem repeats of P-H-G-G-G-W-G-Q. Residues H64, G65, G66, H72, G73, G74, H80, G81, G82, H88, G90, and G91 each coordinate Cu(2+). A disulfide bond links C183 and C218. 2 N-linked (GlcNAc...) asparagine glycosylation sites follow: N185 and N201. A234 carries the GPI-anchor amidated alanine lipid modification. Positions 235 to 257 (SAILFSPPPVILLISLLILLIVG) are cleaved as a propeptide — removed in mature form.

It belongs to the prion family. Monomer and homodimer. Has a tendency to aggregate into amyloid fibrils containing a cross-beta spine, formed by a steric zipper of superposed beta-strands. Soluble oligomers may represent an intermediate stage on the path to fibril formation. Copper binding may promote oligomerization. Interacts with GRB2, APP, ERI3/PRNPIP and SYN1. Mislocalized cytosolically exposed PrP interacts with MGRN1; this interaction alters MGRN1 subcellular location and causes lysosomal enlargement. Interacts with KIAA1191.

It localises to the cell membrane. The protein localises to the golgi apparatus. Its function is as follows. Its primary physiological function is unclear. Has cytoprotective activity against internal or environmental stresses. May play a role in neuronal development and synaptic plasticity. May be required for neuronal myelin sheath maintenance. May play a role in iron uptake and iron homeostasis. Soluble oligomers are toxic to cultured neuroblastoma cells and induce apoptosis (in vitro). Association with GPC1 (via its heparan sulfate chains) targets PRNP to lipid rafts. Also provides Cu(2+) or Zn(2+) for the ascorbate-mediated GPC1 deaminase degradation of its heparan sulfate side chains. The protein is Major prion protein of Vulpes lagopus (Arctic fox).